A 59-amino-acid chain; its full sequence is MGLFSSINTASTGLTAQRLRLDVIANNIANVETTRTSEGGSYRRQRVIFAPRVVSPYWK.

This sequence belongs to the flagella basal body rod proteins family. As to quaternary structure, the basal body constitutes a major portion of the flagellar organelle and consists of four rings (L,P,S, and M) mounted on a central rod. The rod consists of about 26 subunits of FlgG in the distal portion, and FlgB, FlgC and FlgF are thought to build up the proximal portion of the rod with about 6 subunits each.

It localises to the bacterial flagellum basal body. The polypeptide is Flagellar basal-body rod protein FlgC (flgC) (Borrelia hermsii).